The following is a 115-amino-acid chain: Large ribosomal subunit protein uL22 (115 aa).

Belongs to the universal ribosomal protein uL22 family. As to quaternary structure, part of the 50S ribosomal subunit.

In terms of biological role, this protein binds specifically to 23S rRNA; its binding is stimulated by other ribosomal proteins, e.g. L4, L17, and L20. It is important during the early stages of 50S assembly. It makes multiple contacts with different domains of the 23S rRNA in the assembled 50S subunit and ribosome. Functionally, the globular domain of the protein is located near the polypeptide exit tunnel on the outside of the subunit, while an extended beta-hairpin is found that lines the wall of the exit tunnel in the center of the 70S ribosome. The polypeptide is Large ribosomal subunit protein uL22 (Endomicrobium trichonymphae).